The chain runs to 1228 residues: Probable phospholipid-transporting ATPase 5 (1228 aa).

The Cytoplasmic segment spans residues 1–74 (MARGRIRSKL…TTRYNLITFF (74 aa)). A helical transmembrane segment spans residues 75–96 (PKSLYEQFHRAANLYFLVAAIL). Topologically, residues 97–100 (SVFP) are extracellular. Residues 101 to 123 (LSPFNKWSMIAPLVFVVGLSMLK) form a helical membrane-spanning segment. Topologically, residues 124-305 (EALEDWRRFM…SRIERTMDYI (182 aa)) are cytoplasmic. Residues 306–327 (IYTLLVLLILISCISSSGFAWE) form a helical membrane-spanning segment. The Extracellular segment spans residues 328 to 359 (TEFHMPKMWYLRPGEPIDFTNPINPIYAGVVH). The chain crosses the membrane as a helical span at residues 360 to 377 (LITALLLYGYLIPISLYV). Topologically, residues 378-934 (SIEVVKVWQA…HGHWCYKRIA (557 aa)) are cytoplasmic. Aspartate 425 serves as the catalytic 4-aspartylphosphate intermediate. Lysine 616 participates in a covalent cross-link: Glycyl lysine isopeptide (Lys-Gly) (interchain with G-Cter in ubiquitin). Residues aspartate 879 and aspartate 883 each contribute to the Mg(2+) site. A helical transmembrane segment spans residues 935–954 (QMICYFFYKNIAFGLTLFYF). Residues 955 to 968 (EAFTGFSGQSVYND) are Extracellular-facing. The chain crosses the membrane as a helical span at residues 969-988 (YYLLLFNVVLTSLPVIALGV). Over 989 to 1018 (FEQDVSSEICLQFPALYQQGTKNLFFDWSR) the chain is Cytoplasmic. Residues 1019-1041 (ILGWMCNGVYASLVIFFLNIGII) traverse the membrane as a helical segment. Topologically, residues 1042–1054 (YSQAFRDNGQTAD) are extracellular. A helical transmembrane segment spans residues 1055-1077 (MDAVGTTMFTCIIWAANVQIALT). Over 1078–1083 (MSHFTW) the chain is Cytoplasmic. Residues 1084 to 1104 (IQHVLIWGSIGMWYLFVAIYS) form a helical membrane-spanning segment. The Extracellular segment spans residues 1105 to 1117 (MMPPSYSGNIYRI). Residues 1118–1146 (LDEILAPAPIYWMATLLVTVAAVLPYVAH) form a helical membrane-spanning segment. Over 1147 to 1228 (IAFQRFLNPL…AQDAMSPRSL (82 aa)) the chain is Cytoplasmic.

Belongs to the cation transport ATPase (P-type) (TC 3.A.3) family. Type IV subfamily.

Its subcellular location is the membrane. It carries out the reaction ATP + H2O + phospholipidSide 1 = ADP + phosphate + phospholipidSide 2.. Functionally, involved in transport of phospholipids. This is Probable phospholipid-transporting ATPase 5 from Arabidopsis thaliana (Mouse-ear cress).